Here is a 1057-residue protein sequence, read N- to C-terminus: Carbamoyl phosphate synthase large chain (1057 aa).

The tract at residues 1-401 (MPKRDDIQTI…SLLKAIRSLE (401 aa)) is carboxyphosphate synthetic domain. ATP is bound by residues R129, R169, G175, G176, K208, I210, E215, G241, I242, H243, Q284, and E298. Residues 133–327 (RTLMNDLNVP…IAKLAAKIAV (195 aa)) enclose the ATP-grasp 1 domain. Residues Q284, E298, and N300 each contribute to the Mg(2+) site. Mn(2+) is bound by residues Q284, E298, and N300. The oligomerization domain stretch occupies residues 402–546 (YGVHHLGLPN…YGTYEDENES (145 aa)). The segment at 547-929 (IVTDKEKILV…ALYKGLTGSG (383 aa)) is carbamoyl phosphate synthetic domain. An ATP-grasp 2 domain is found at 671 to 861 (EALLREISVP…MAQLAMRAIM (191 aa)). Positions 707, 746, 748, 752, 777, 778, 779, 780, 820, and 832 each coordinate ATP. Q820, E832, and N834 together coordinate Mg(2+). Residues Q820, E832, and N834 each coordinate Mn(2+). The 128-residue stretch at 930 to 1057 (FEVKDHGTVL…ESMTFTMRNV (128 aa)) folds into the MGS-like domain. The segment at 930 to 1057 (FEVKDHGTVL…ESMTFTMRNV (128 aa)) is allosteric domain.

Belongs to the CarB family. Composed of two chains; the small (or glutamine) chain promotes the hydrolysis of glutamine to ammonia, which is used by the large (or ammonia) chain to synthesize carbamoyl phosphate. Tetramer of heterodimers (alpha,beta)4. It depends on Mg(2+) as a cofactor. Mn(2+) is required as a cofactor.

The enzyme catalyses hydrogencarbonate + L-glutamine + 2 ATP + H2O = carbamoyl phosphate + L-glutamate + 2 ADP + phosphate + 2 H(+). It catalyses the reaction hydrogencarbonate + NH4(+) + 2 ATP = carbamoyl phosphate + 2 ADP + phosphate + 2 H(+). It participates in amino-acid biosynthesis; L-arginine biosynthesis; carbamoyl phosphate from bicarbonate: step 1/1. Its pathway is pyrimidine metabolism; UMP biosynthesis via de novo pathway; (S)-dihydroorotate from bicarbonate: step 1/3. In terms of biological role, large subunit of the glutamine-dependent carbamoyl phosphate synthetase (CPSase). CPSase catalyzes the formation of carbamoyl phosphate from the ammonia moiety of glutamine, carbonate, and phosphate donated by ATP, constituting the first step of 2 biosynthetic pathways, one leading to arginine and/or urea and the other to pyrimidine nucleotides. The large subunit (synthetase) binds the substrates ammonia (free or transferred from glutamine from the small subunit), hydrogencarbonate and ATP and carries out an ATP-coupled ligase reaction, activating hydrogencarbonate by forming carboxy phosphate which reacts with ammonia to form carbamoyl phosphate. The polypeptide is Carbamoyl phosphate synthase large chain (Staphylococcus epidermidis (strain ATCC 35984 / DSM 28319 / BCRC 17069 / CCUG 31568 / BM 3577 / RP62A)).